The primary structure comprises 1370 residues: Putative surface protein SA2285 (1370 aa).

The first 50 residues, 1–50 (MRDKKGPVNKRVDFLSNKLNKYSIRKFTVGTASILIGSLMYLGTQQEAEA), serve as a signal peptide directing secretion. Disordered stretches follow at residues 77–116 (NKDT…EDTP), 439–472 (KFNP…NPLT), and 495–1344 (EYGP…TGLE). 24 stretches are compositionally biased toward basic and acidic residues: residues 96–116 (DTIE…EDTP), 450–460 (KVTREGQKGEK), 504–522 (GHRD…EEVP), 553–569 (SIVE…RKFN), 578–588 (KVTREGQKGEK), 605–618 (SKGE…KDPI), 632–650 (GHRD…EEVP), 681–697 (SIVE…RKFN), 706–716 (KVTREGQKGEK), 733–746 (SKGE…KDPI), 760–778 (GHRD…EEVP), 809–825 (SIVE…RKFN), 834–844 (KVTREGQKGEK), 861–874 (SKGE…KDPI), 888–906 (GHRD…EEVP), 937–953 (SIVE…RKFN), 962–972 (KVTREGQKGEK), 989–1002 (SKGE…KDPI), 1016–1034 (GHRD…EEVP), 1065–1081 (SIVE…RKFN), 1090–1100 (KVTREGQKGEK), 1117–1130 (SKGE…KDPV), 1174–1185 (KVIEEPVDDVIK), and 1202–1221 (FETK…RVKQ). Positions 418-500 (SAKNNNRIRK…NELTEYGPET (83 aa)) constitute a G5 1 domain. The 83-residue stretch at 546–628 (YGPVKGDSIV…NELTEYGPET (83 aa)) folds into the G5 2 domain. Residues 674-756 (YGPVKGDSIV…NELTEYGPET (83 aa)) enclose the G5 3 domain. The G5 4 domain occupies 802 to 884 (YGPVKGDSIV…NELTEYGPET (83 aa)). Positions 930–1012 (YGPVKGDSIV…NELTEYGPET (83 aa)) constitute a G5 5 domain. The region spanning 1058–1140 (YGPVKGDSIV…NELTEFGGEK (83 aa)) is the G5 6 domain. Residues 1186 to 1268 (HGPKTGTPET…DKIVEFGGEK (83 aa)) enclose the G5 7 domain. Residues 1224-1238 (QPGSKTITTPITVNP) show a composition bias toward polar residues. Basic and acidic residues predominate over residues 1252–1282 (EITKQPVDKIVEFGGEKPKDPKGPENPEKPS). An LPXTG sorting signal motif is present at residues 1338-1342 (LPKTG). Pentaglycyl murein peptidoglycan amidated threonine is present on Thr-1341. The propeptide at 1342–1370 (GLESTQKGLIFSSIIGIAGLMLLARRRKN) is removed by sortase.

The protein resides in the secreted. Its subcellular location is the cell wall. This chain is Putative surface protein SA2285, found in Staphylococcus aureus (strain N315).